The following is a 263-amino-acid chain: MSTPSPQLLVAAAQQTLGMGKRRGPPRAVCLHLAGEVLAVARGLKPALLYDCSSAGAPEIQSYLEKLRGLGFPTQGLHVLEIAENSLIVHPEYVRRHLEQVLLGSIAFVDVSGSQPYPAVCSLDQLQDFKALVVEIITHLQGLQRDRSLAVSCSRLCSSAWNLCTVFGILLGYPVPYTFHENQGEDNCLAQTPLRVFTARISWLCCQPPVLLYSFSVPESLFLSLRDILNTWEKDLRTRCRTQNDFADLSISSEIVTLPAVAL.

The protein belongs to the UPF0739 family.

This Bos taurus (Bovine) protein is UPF0739 protein C1orf74 homolog.